Here is a 590-residue protein sequence, read N- to C-terminus: Cytosolic Fe-S cluster assembly factor nar1 (590 aa).

[4Fe-4S] cluster is bound at residue C20. Positions 25 to 50 are disordered; sequence ESLPQKQSNENPYEVTTEDKVQPENP. [4Fe-4S] cluster contacts are provided by C60, C63, C66, C204, and C259. The segment at 423-446 is disordered; that stretch reads PGAKVATGQTAGGRRQPISRNGAS. [4Fe-4S] cluster is bound by residues C461 and C465.

This sequence belongs to the NARF family.

Component of the cytosolic Fe/S protein assembly machinery. Required for maturation of extramitochondrial Fe/S proteins. May play a role in the transfer of pre-assembled Fe/S clusters to target apoproteins. This Emericella nidulans (strain FGSC A4 / ATCC 38163 / CBS 112.46 / NRRL 194 / M139) (Aspergillus nidulans) protein is Cytosolic Fe-S cluster assembly factor nar1 (nar1).